Reading from the N-terminus, the 522-residue chain is Circadian clock oscillator protein KaiC (522 aa).

KaiC domains lie at 1–248 (MKKS…INIF) and 262–522 (ARVS…DDLL). Gly-50, Thr-51, Gly-52, Lys-53, Thr-54, Ser-90, Lys-225, Leu-226, Arg-227, Thr-229, His-231, Thr-241, Asp-242, Thr-291, Gly-292, Thr-293, Gly-294, Lys-295, Thr-296, and Leu-297 together coordinate ATP. Residue Thr-54 participates in Mg(2+) binding. Thr-296 is a Mg(2+) binding site. Residue Glu-319 participates in Mg(2+) binding. Residue Trp-332 coordinates ATP. Ser-432 is modified (phosphoserine; by autocatalysis). Thr-433 is subject to Phosphothreonine; by autocatalysis. Residues Arg-452, Lys-458, Met-459, Arg-460, Ser-462, His-464, and Lys-466 each contribute to the ATP site.

This sequence belongs to the KaiC family. Homohexamer; hexamerization is dependent on ATP-binding. The KaiABC complex composition changes during the circadian cycle to control KaiC phosphorylation. Complexes KaiC(6), KaiA(2-4):KaiC(6), KaiB(6):KaiC(6) and KaiC(6):KaiB(6):KaiA(12) are among the most important forms, many form cooperatively. KaiC interacts with SasA, activating its autokinase function and leading to RpaA activation. Mg(2+) serves as cofactor. Post-translationally, phosphorylated on serine and threonine residues by autocatalysis. Has a 4 step phosphorylation cycle; the autokinase acts first on Thr-433, then Ser-432. When Ser-432 is modified KaiC switches to an autophosphatase mode, acting first on phospho-Thr-433 then phospho-Ser-432.

The catalysed reaction is L-seryl-[protein] + ATP = O-phospho-L-seryl-[protein] + ADP + H(+). It carries out the reaction L-threonyl-[protein] + ATP = O-phospho-L-threonyl-[protein] + ADP + H(+). It catalyses the reaction ATP + H2O = ADP + phosphate + H(+). With respect to regulation, the interaction with KaiA enhances its phosphorylation status, while the interaction with KaiB decreases it. Functionally, central component of the KaiABC oscillator complex, which constitutes the main circadian regulator in cyanobacteria. Complex composition changes during the circadian cycle to control KaiC phosphorylation. KaiA stimulates KaiC autophosphorylation, while KaiB sequesters KaiA, leading to KaiC autodephosphorylation. Clock output pathways impact the RpaA transcriptional regulator. KaiC enhances the autophosphorylation activity of SasA, which then transfers its phosphate group to RpaA to activate it. KaiB and KaiC together enhance the phospho-RpaA dephosphatase activity of CikA. Has a weak, temperature-independent ATPase activity; ATPase activity defines the circadian period. The phosphorylation state of KaiC modulates its ATPase activity and effects KaiB binding. The chain is Circadian clock oscillator protein KaiC from Acaryochloris marina (strain MBIC 11017).